The following is a 380-amino-acid chain: Cytochrome b (380 aa).

The next 4 membrane-spanning stretches (helical) occupy residues 34 to 54 (FGSL…FLAM), 78 to 99 (WLLR…YCHI), 114 to 134 (WNVG…GYVL), and 179 to 199 (FFAF…IDLV). Positions 84 and 98 each coordinate heme b. Residue His-183 participates in heme b binding. His-202 serves as a coordination point for a ubiquinone. 4 helical membrane passes run 227–247 (TKDT…ALLF), 289–309 (LGGV…PLLN), 321–341 (LSQA…WIGS), and 348–369 (FVLI…GFPL).

The protein belongs to the cytochrome b family. As to quaternary structure, the main subunits of complex b-c1 are: cytochrome b, cytochrome c1 and the Rieske protein. The cofactor is heme b.

It localises to the mitochondrion inner membrane. In terms of biological role, component of the ubiquinol-cytochrome c reductase complex (complex III or cytochrome b-c1 complex) that is part of the mitochondrial respiratory chain. The b-c1 complex mediates electron transfer from ubiquinol to cytochrome c. Contributes to the generation of a proton gradient across the mitochondrial membrane that is then used for ATP synthesis. The polypeptide is Cytochrome b (MT-CYB) (Paracentrotus lividus (Common sea urchin)).